The chain runs to 354 residues: Guanine nucleotide-binding protein G(i) subunit alpha-1 (354 aa).

G2 is lipidated: N-myristoyl glycine. The S-palmitoyl cysteine moiety is linked to residue C3. The region spanning 32-354 is the G-alpha domain; the sequence is REVKLLLLGA…KNNLKDCGLF (323 aa). Residues 35–48 are G1 motif; sequence KLLLLGAGESGKST. Residues 43 to 48, 150 to 151, and 175 to 178 contribute to the GTP site; these read ESGKST, DS, and LRTR. S47 is a binding site for Mg(2+). Residues 173–181 are G2 motif; the sequence is DVLRTRVKT. T181 provides a ligand contact to Mg(2+). The G3 motif stretch occupies residues 196-205; it reads FKMFDVGGQR. Residues 200 to 204, 269 to 272, and A326 each bind GTP; these read DVGGQ and NKKD. Positions 265 to 272 are G4 motif; that stretch reads ILFLNKKD. The segment at 324-329 is G5 motif; the sequence is TCATDT.

The protein belongs to the G-alpha family. G(i/o/t/z) subfamily. As to quaternary structure, heterotrimeric G proteins are composed of 3 units; alpha, beta and gamma. The alpha chain contains the guanine nucleotide binding site. Part of a spindle orientation complex. Identified in complex with the beta subunit GNB1 and the gamma subunit GNG1. Identified in complex with the beta subunit GNB1 and the gamma subunit GNG2. GTP binding causes dissociation of the heterotrimer, liberating the individual subunits so that they can interact with downstream effector proteins. In terms of processing, myristoylation at Gly-2 is required for membrane anchoring before palmitoylation. Palmitoylation at Cys-3 varies with membrane lipid composition.

The protein localises to the nucleus. It is found in the cytoplasm. Its subcellular location is the cell membrane. It localises to the cytoskeleton. The protein resides in the microtubule organizing center. The protein localises to the centrosome. It is found in the cell cortex. Its subcellular location is the membrane. It catalyses the reaction GTP + H2O = GDP + phosphate + H(+). In terms of biological role, guanine nucleotide-binding proteins (G proteins) function as transducers downstream of G protein-coupled receptors (GPCRs) in numerous signaling cascades. The alpha chain contains the guanine nucleotide binding site and alternates between an active, GTP-bound state and an inactive, GDP-bound state. Signaling by an activated GPCR promotes GDP release and GTP binding. The alpha subunit has a low GTPase activity that converts bound GTP to GDP, thereby terminating the signal. Both GDP release and GTP hydrolysis are modulated by numerous regulatory proteins. Signaling is mediated via effector proteins, such as adenylate cyclase. Inhibits adenylate cyclase activity of ADCY1, ADCY5 and ADCY6, leading to decreased intracellular cAMP levels. Required for cortical dynein-dynactin complex recruitment during metaphase. The sequence is that of Guanine nucleotide-binding protein G(i) subunit alpha-1 (GNAI1) from Gallus gallus (Chicken).